We begin with the raw amino-acid sequence, 96 residues long: Co-chaperonin GroES (96 aa).

The protein belongs to the GroES chaperonin family. Heptamer of 7 subunits arranged in a ring. Interacts with the chaperonin GroEL.

The protein localises to the cytoplasm. In terms of biological role, together with the chaperonin GroEL, plays an essential role in assisting protein folding. The GroEL-GroES system forms a nano-cage that allows encapsulation of the non-native substrate proteins and provides a physical environment optimized to promote and accelerate protein folding. GroES binds to the apical surface of the GroEL ring, thereby capping the opening of the GroEL channel. This chain is Co-chaperonin GroES, found in Buchnera aphidicola subsp. Schizaphis graminum (strain Sg).